A 148-amino-acid chain; its full sequence is 3-dehydroquinate dehydratase (148 aa).

The Proton acceptor role is filled by Tyr-24. Substrate contacts are provided by Asn-75, His-81, and Asp-88. His-101 acts as the Proton donor in catalysis. Residues Leu-102 to Ser-103 and Arg-112 contribute to the substrate site.

This sequence belongs to the type-II 3-dehydroquinase family. Homododecamer.

The catalysed reaction is 3-dehydroquinate = 3-dehydroshikimate + H2O. Its pathway is metabolic intermediate biosynthesis; chorismate biosynthesis; chorismate from D-erythrose 4-phosphate and phosphoenolpyruvate: step 3/7. Functionally, catalyzes a trans-dehydration via an enolate intermediate. This Bartonella henselae (strain ATCC 49882 / DSM 28221 / CCUG 30454 / Houston 1) (Rochalimaea henselae) protein is 3-dehydroquinate dehydratase.